Here is a 363-residue protein sequence, read N- to C-terminus: GDP-fucose transporter 1 (363 aa).

8 helical membrane-spanning segments follow: residues F33–V55, V75–C97, L110–F129, V139–L161, S166–I184, S194–I213, I226–L248, and A263–L285.

Belongs to the TPT transporter family. SLC35C subfamily.

Its subcellular location is the golgi apparatus membrane. It catalyses the reaction GMP(out) + GDP-beta-L-fucose(in) = GMP(in) + GDP-beta-L-fucose(out). Antiporter specific for GDP-l-fucose and depending on the concomitant reverse transport of GMP. Involved in GDP-fucose import from the cytoplasm into the Golgi lumen. In Mus musculus (Mouse), this protein is GDP-fucose transporter 1 (Slc35c1).